Consider the following 658-residue polypeptide: Sodium/nucleoside cotransporter 1 (658 aa).

Over 1 to 75 the chain is Cytoplasmic; that stretch reads MEKASGRKSL…ARTFCQRHAS (75 aa). Residues 76–99 traverse the membrane as a helical segment; sequence LFKKILLGLLCLAYAAYFLAACIL. Over 100–104 the chain is Extracellular; sequence DFQRA. The helical transmembrane segment at 105–123 threads the bilayer; it reads LALFVITCLVILVLLLHFL. Topologically, residues 124–142 are cytoplasmic; it reads KKFLGKKLTRCLKPFKNSQ. A helical transmembrane segment spans residues 143 to 162; sequence LRLWIKRVFAGVSLVGLILW. At 163–173 the chain is on the extracellular side; sequence LALDTAQRPEQ. The chain crosses the membrane as a helical span at residues 174 to 190; it reads LISFAGICMFVLILFAC. Topologically, residues 191 to 196 are cytoplasmic; it reads SKHHSA. Residues 197–217 form a helical membrane-spanning segment; sequence VSWRTVFWGLGLQFVFGLLVI. Topologically, residues 218–256 are extracellular; it reads RTDPGFIAFQWLGDQVQIFLAYTVAGSSFVLGDTLVNDV. A helical transmembrane segment spans residues 257–278; the sequence is FAFQSLPIIIFFGCVMSILYYL. Over 279–289 the chain is Cytoplasmic; it reads GLVQWVVQKIA. A helical transmembrane segment spans residues 290 to 313; that stretch reads WFLQVTMRTTATETLAVAGNIFVG. Residues 314–332 lie on the Extracellular side of the membrane; the sequence is MTEAPLLIRPYLADLTLSE. Residues 333–355 form a helical membrane-spanning segment; that stretch reads IHAVMTSGFATISGTVLGAFISF. Residues 356-361 lie on the Cytoplasmic side of the membrane; sequence GIDASS. The chain crosses the membrane as a helical span at residues 362–381; the sequence is LISASVMGAPCALALSKLVY. Over 382–418 the chain is Extracellular; the sequence is PEEEESKFKSKEGVKLPRGKESNVLEAASNGATDAIA. The chain crosses the membrane as a helical span at residues 419 to 441; it reads LVANVAANLVAFLAVLAFINAAL. The Cytoplasmic segment spans residues 442–452; sequence SWLGELVDIQG. Residues 453 to 474 form a helical membrane-spanning segment; the sequence is LTFQVICSYILRPMVYMMGVEW. Topologically, residues 475–529 are extracellular; it reads TDCPMVAEMVGIKFFTNEFVAYQQLSQYKKKRLSGMEEWIDGQKQWISVRAEVIT. The chain crosses the membrane as a helical span at residues 530-553; the sequence is TFSLCGFANLSSIGITLGGLTSMV. Topologically, residues 554–564 are cytoplasmic; it reads PHRKSDLSKVV. A helical membrane pass occupies residues 565 to 587; the sequence is IRALFTGSCVSFISACVAGILYV. Residues 588-658 are Extracellular-facing; that stretch reads PRGAETDCVS…CGFYNNTVCA (71 aa). Asn653 carries N-linked (GlcNAc...) asparagine glycosylation.

It belongs to the concentrative nucleoside transporter (CNT) (TC 2.A.41) family. Post-translationally, N-glycosylated. N-glycosylation is required for localization to the plasma membrane and the transporter activity.

It localises to the cell membrane. Its subcellular location is the apical cell membrane. The enzyme catalyses uridine(out) + Na(+)(out) = uridine(in) + Na(+)(in). The catalysed reaction is thymidine(out) + Na(+)(out) = thymidine(in) + Na(+)(in). It catalyses the reaction cytidine(out) + Na(+)(out) = cytidine(in) + Na(+)(in). It carries out the reaction adenosine(out) + Na(+)(out) = adenosine(in) + Na(+)(in). Due to its high apparent affinity but slow transport, adenosine could act as a negative regulator of pyrimidine transport under some conditions. Functionally, sodium and pyrimidine nucleoside symporter of the plasma membrane that imports uridine, thymidine and cytidine into cells by coupling their transport to the transmembrane sodium electrochemical gradient. Also transports adenosine, an atypical substrate transported with high apparent affinity, but low maximum velocity. Therefore, exhibits the transport characteristics of the nucleoside transport system cit or N2 subtype (N2/cit). Involved in renal nucleoside (re)absorption. This Oryctolagus cuniculus (Rabbit) protein is Sodium/nucleoside cotransporter 1 (SLC28A1).